The chain runs to 339 residues: Tetraacyldisaccharide 4'-kinase (339 aa).

Residue 58-65 participates in ATP binding; it reads TVGGSGKT.

This sequence belongs to the LpxK family.

It catalyses the reaction a lipid A disaccharide + ATP = a lipid IVA + ADP + H(+). Its pathway is glycolipid biosynthesis; lipid IV(A) biosynthesis; lipid IV(A) from (3R)-3-hydroxytetradecanoyl-[acyl-carrier-protein] and UDP-N-acetyl-alpha-D-glucosamine: step 6/6. Transfers the gamma-phosphate of ATP to the 4'-position of a tetraacyldisaccharide 1-phosphate intermediate (termed DS-1-P) to form tetraacyldisaccharide 1,4'-bis-phosphate (lipid IVA). The sequence is that of Tetraacyldisaccharide 4'-kinase from Shewanella baltica (strain OS155 / ATCC BAA-1091).